The chain runs to 497 residues: Glutamyl-tRNA reductase (497 aa).

Residues 58 to 61 (TCNR), S118, 123 to 125 (EQQ), and Q129 contribute to the substrate site. The Nucleophile role is filled by C59. 214-219 (GAGAMA) serves as a coordination point for NADP(+). Positions 461–477 (VTQPGQADSSAAQTAGT) are enriched in polar residues. The tract at residues 461–486 (VTQPGQADSSAAQTAGTSARADQIPS) is disordered.

It belongs to the glutamyl-tRNA reductase family. As to quaternary structure, homodimer.

The enzyme catalyses (S)-4-amino-5-oxopentanoate + tRNA(Glu) + NADP(+) = L-glutamyl-tRNA(Glu) + NADPH + H(+). It functions in the pathway porphyrin-containing compound metabolism; protoporphyrin-IX biosynthesis; 5-aminolevulinate from L-glutamyl-tRNA(Glu): step 1/2. Functionally, catalyzes the NADPH-dependent reduction of glutamyl-tRNA(Glu) to glutamate 1-semialdehyde (GSA). This Corynebacterium jeikeium (strain K411) protein is Glutamyl-tRNA reductase.